The sequence spans 263 residues: Lens fiber major intrinsic protein (263 aa).

Residues 1–12 (MWELRSASFWRA) lie on the Cytoplasmic side of the membrane. A helical membrane pass occupies residues 13 to 30 (IFAEFFATLFYVFFGLGA). The Extracellular segment spans residues 31 to 40 (SLRWAPGPLH). Residues 41 to 59 (VLQVALAFGLALATLVQAV) form a helical membrane-spanning segment. Topologically, residues 60 to 63 (GHIS) are cytoplasmic. The discontinuously helical intramembrane region spans 64–76 (GAHVNPAVTFAFL). The NPA 1 signature appears at 68–70 (NPA). The Cytoplasmic segment spans residues 77 to 85 (VGSQMSLLR). A helical membrane pass occupies residues 86 to 106 (AICYVVAQLLGAVAGAAVLYS). At 107–126 (VTPPAVRGNLALNTLHPGVS) the chain is on the extracellular side. Residues 127–147 (VGQATIVEIFLTLQFVLCIFA) traverse the membrane as a helical segment. The Cytoplasmic segment spans residues 148 to 157 (TYDERRNGRL). Residues 158-175 (GSVALAVGFSLTLGHLFG) traverse the membrane as a helical segment. The Extracellular segment spans residues 176-177 (MY). Positions 178–193 (YTGAGMNPARSFAPAI) form an intramembrane region, discontinuously helical. Residues 184–186 (NPA) carry the NPA 2 motif. Topologically, residues 194-200 (LTRNFTN) are extracellular. The helical transmembrane segment at 201–218 (HWVYWVGPVIGAGLGSLL) threads the bilayer. At 219 to 263 (YDFLLFPRLKSVSERLSILKGTRPSESNGQPEVTGEPVELKTQAL) the chain is on the cytoplasmic side. Residues 227 to 237 (LKSVSERLSIL) form an interaction with CALM region. Residues serine 235, serine 243, and serine 245 each carry the phosphoserine modification. The tract at residues 240–263 (TRPSESNGQPEVTGEPVELKTQAL) is disordered.

It belongs to the MIP/aquaporin (TC 1.A.8) family. Homotetramer; each monomer provides an independent water pore. Two homotetramers on opposing membranes can dimerize, forming a cell-cell junction. Interacts with CALM; the calcium-calmodulin/CALM complex interacts with the cytoplasmic domains of two aquaporins, leading to channel closure. Interacts with BFSP1 (via C-terminus); prevents calcium-dependent inhibition of the water channel activity. Post-translationally, subject to partial proteolytic cleavage in the eye lens core. Partial proteolysis promotes interactions between tetramers from adjoining membranes. In terms of processing, fatty acylated at Met-1 and Lys-238. The acyl modifications, in decreasing order of ion abundance, are: oleoyl (C18:1) &gt; palmitoyl (C16:0) &gt; stearoyl (C18:0) &gt; eicosenoyl (C20:1) &gt; dihomo-gamma-linolenoyl (C20:3) &gt; palmitoleoyl (C16:1) &gt; eicosadienoyl (C20:2). Detected in eye lens (at protein level).

It is found in the cell membrane. The protein localises to the cell junction. The catalysed reaction is H2O(in) = H2O(out). Its activity is regulated as follows. The water channel activity is inhibited by calcium through calmodulin/CALM. Functionally, aquaporins form homotetrameric transmembrane channels, with each monomer independently mediating water transport across the plasma membrane along its osmotic gradient. Specifically expressed in lens fiber cells, this aquaporin is crucial for maintaining lens water homeostasis and transparency. Beyond water permeability, it also acts as a cell-to-cell adhesion molecule, forming thin junctions between lens fiber cells that are essential for maintaining the ordered structure and transparency of the lens. The sequence is that of Lens fiber major intrinsic protein from Ovis aries (Sheep).